A 101-amino-acid polypeptide reads, in one-letter code: Replication restart protein PriB (101 aa).

The region spanning 1-101 (MTTNNLVLSG…IHAENVELKT (101 aa)) is the SSB domain.

Belongs to the PriB family. As to quaternary structure, homodimer. Interacts with PriA and DnaT. Component of the replication restart primosome. Primosome assembly occurs via a 'hand-off' mechanism. PriA binds to replication forks, subsequently PriB then DnaT bind; DnaT then displaces ssDNA to generate the helicase loading substrate.

Involved in the restart of stalled replication forks, which reloads the replicative helicase on sites other than the origin of replication; the PriA-PriB pathway is the major replication restart pathway. During primosome assembly it facilitates complex formation between PriA and DnaT on DNA; stabilizes PriA on DNA. Stimulates the DNA unwinding activity of PriA helicase. This chain is Replication restart protein PriB, found in Shewanella oneidensis (strain ATCC 700550 / JCM 31522 / CIP 106686 / LMG 19005 / NCIMB 14063 / MR-1).